Here is a 318-residue protein sequence, read N- to C-terminus: Probable pyridoxal 5'-phosphate synthase subunit PDX1.1 (318 aa).

D-ribose 5-phosphate is bound at residue D49. K106 functions as the Schiff-base intermediate with D-ribose 5-phosphate in the catalytic mechanism. G178 provides a ligand contact to D-ribose 5-phosphate. R190 serves as a coordination point for D-glyceraldehyde 3-phosphate. Residues G239 and 260 to 261 (GS) contribute to the D-ribose 5-phosphate site.

The protein belongs to the PdxS/SNZ family.

The enzyme catalyses aldehydo-D-ribose 5-phosphate + D-glyceraldehyde 3-phosphate + L-glutamine = pyridoxal 5'-phosphate + L-glutamate + phosphate + 3 H2O + H(+). It participates in cofactor biosynthesis; pyridoxal 5'-phosphate biosynthesis. Functionally, catalyzes the formation of pyridoxal 5'-phosphate from ribose 5-phosphate (RBP), glyceraldehyde 3-phosphate (G3P) and ammonia. The ammonia is provided by PDX2. Can also use ribulose 5-phosphate and dihydroxyacetone phosphate as substrates, resulting from enzyme-catalyzed isomerization of RBP and G3P, respectively. Also plays an indirect role in resistance to singlet oxygen-generating photosensitizers. This is Probable pyridoxal 5'-phosphate synthase subunit PDX1.1 (PDX11) from Oryza sativa subsp. japonica (Rice).